A 380-amino-acid polypeptide reads, in one-letter code: Chaperone protein DnaJ (380 aa).

Residues 5–69 (DLYKVLGVEK…QKRAQYDQFG (65 aa)) form the J domain. The CR-type zinc finger occupies 140-222 (GKKTTITYNR…CGGSGHTEQS (83 aa)). 8 residues coordinate Zn(2+): Cys-153, Cys-156, Cys-170, Cys-173, Cys-196, Cys-199, Cys-210, and Cys-213. CXXCXGXG motif repeat units lie at residues 153-160 (CETCGGSG), 170-177 (CSKCHGAG), 196-203 (CDVCHGTG), and 210-217 (CATCGGSG).

It belongs to the DnaJ family. In terms of assembly, homodimer. Zn(2+) serves as cofactor.

Its subcellular location is the cytoplasm. In terms of biological role, participates actively in the response to hyperosmotic and heat shock by preventing the aggregation of stress-denatured proteins and by disaggregating proteins, also in an autonomous, DnaK-independent fashion. Unfolded proteins bind initially to DnaJ; upon interaction with the DnaJ-bound protein, DnaK hydrolyzes its bound ATP, resulting in the formation of a stable complex. GrpE releases ADP from DnaK; ATP binding to DnaK triggers the release of the substrate protein, thus completing the reaction cycle. Several rounds of ATP-dependent interactions between DnaJ, DnaK and GrpE are required for fully efficient folding. Also involved, together with DnaK and GrpE, in the DNA replication of plasmids through activation of initiation proteins. In Lactiplantibacillus plantarum (strain ATCC BAA-793 / NCIMB 8826 / WCFS1) (Lactobacillus plantarum), this protein is Chaperone protein DnaJ.